A 245-amino-acid chain; its full sequence is Vacuolar iron transporter (245 aa).

Residues 1–28 (MGEVGESEKYLLNRHKEHHFTAGETVRD) lie on the Cytoplasmic side of the membrane. The chain crosses the membrane as a helical span at residues 29-49 (IIIGFSDGLTVPFALAAGLSG). Topologically, residues 50 to 55 (ANASSS) are vacuolar. A helical membrane pass occupies residues 56–76 (IILTAGIAEVAAGAISMGLGG). Residues 77-162 (YLAAKSEADH…PRRALQSALT (86 aa)) are Cytoplasmic-facing. The Fe cation site is built by Glu-94, Glu-97, Glu-105, Glu-108, Met-141, and Glu-145. The helical transmembrane segment at 163–183 (IAISYVLSGLIPLLPYMFIPI) threads the bilayer. The Vacuolar portion of the chain corresponds to 184 to 186 (AQK). The chain crosses the membrane as a helical span at residues 187 to 207 (AVVSSVIVTIFALLIFGFAKG). At 208–214 (YFTGNKP) the chain is on the cytoplasmic side. Residues 215–235 (VWSALQTALIGAIASAAAFGM) traverse the membrane as a helical segment. The Vacuolar portion of the chain corresponds to 236 to 245 (AKGCASSVFE).

It belongs to the CCC1 family. Expressed in petal tissues, but not in other parts of the plant, such as leaves, roots, sepals and stems.

It localises to the vacuole membrane. It catalyses the reaction Fe(2+)(in) = Fe(2+)(out). Its function is as follows. Vacuolar iron transporter involved in the transfer of iron ions from the cytosol to the vacuole for intracellular iron storage. Plays an essential role in the development of blue coloration in cornflower petals. This is Vacuolar iron transporter from Centaurea cyanus (Garden cornflower).